Consider the following 215-residue polypeptide: Redox-sensing transcriptional repressor Rex (215 aa).

The H-T-H motif DNA-binding region spans 18–57 (LYYRFLKNLHASGKQRVSSAELSDAVKVDSATIRRDFSYF). NAD(+) is bound at residue 92 to 97 (GVGNLG).

Belongs to the transcriptional regulatory Rex family. In terms of assembly, homodimer.

The protein localises to the cytoplasm. In terms of biological role, modulates transcription in response to changes in cellular NADH/NAD(+) redox state. In Bacillus velezensis (strain DSM 23117 / BGSC 10A6 / LMG 26770 / FZB42) (Bacillus amyloliquefaciens subsp. plantarum), this protein is Redox-sensing transcriptional repressor Rex.